The following is a 251-amino-acid chain: Imidazole glycerol phosphate synthase subunit HisF (251 aa).

Catalysis depends on residues Asp-11 and Asp-130.

The protein belongs to the HisA/HisF family. Heterodimer of HisH and HisF.

It localises to the cytoplasm. It catalyses the reaction 5-[(5-phospho-1-deoxy-D-ribulos-1-ylimino)methylamino]-1-(5-phospho-beta-D-ribosyl)imidazole-4-carboxamide + L-glutamine = D-erythro-1-(imidazol-4-yl)glycerol 3-phosphate + 5-amino-1-(5-phospho-beta-D-ribosyl)imidazole-4-carboxamide + L-glutamate + H(+). Its pathway is amino-acid biosynthesis; L-histidine biosynthesis; L-histidine from 5-phospho-alpha-D-ribose 1-diphosphate: step 5/9. Its function is as follows. IGPS catalyzes the conversion of PRFAR and glutamine to IGP, AICAR and glutamate. The HisF subunit catalyzes the cyclization activity that produces IGP and AICAR from PRFAR using the ammonia provided by the HisH subunit. The chain is Imidazole glycerol phosphate synthase subunit HisF from Thiobacillus denitrificans (strain ATCC 25259 / T1).